A 1021-amino-acid polypeptide reads, in one-letter code: Chondroitin sulfate ABC endolyase (1021 aa).

An N-terminal signal peptide occupies residues 1–24 (MPIFRFTALAMTLGLLSAPYNAMA). Na(+) contacts are provided by His43, Met70, Gln73, and Asp211. His501 serves as the catalytic Proton acceptor. Residue Tyr508 is the Proton donor of the active site.

This sequence belongs to the polysaccharide lyase 8 family. Monomer.

It localises to the periplasm. It carries out the reaction Endolytic cleavage of (1-&gt;4)-beta-galactosaminic bonds between N-acetylgalactosamine and either D-glucuronic acid or L-iduronic acid to produce a mixture of Delta(4)-unsaturated oligosaccharides of different sizes that are ultimately degraded to Delta(4)-unsaturated tetra- and disaccharides.. With respect to regulation, is inhibited by Zn(2+), Ni(2+), Fe(2+) and Cu(2+). In terms of biological role, endolytic, broad-specificity glycosaminoglycan lyase, which degrades the polysaccharides chondroitin, chondroitin-4-sulfate, chondroitin-6-sulfate, dermatan sulfate and to a lesser extent hyaluronan, by beta-elimination of 1,4-hexosaminidic bond to unsaturated tetrasaccharides and disaccharides. Is not active against keratan sulfate, heparan sulfate, and heparin. Is able to promote functional recovery in the injured central nervous system (CNS), via its role in the disruption of the normal organization of the extracellular matrix (ECM). The chain is Chondroitin sulfate ABC endolyase from Proteus vulgaris.